Consider the following 338-residue polypeptide: Secretion system apparatus protein SsaL (338 aa).

In Salmonella typhimurium (strain LT2 / SGSC1412 / ATCC 700720), this protein is Secretion system apparatus protein SsaL (ssaL).